The sequence spans 204 residues: Large ribosomal subunit protein eL15A (204 aa).

Residues Leu-164–Ala-185 are disordered. Residues Lys-169 to Ala-185 are compositionally biased toward basic residues.

This sequence belongs to the eukaryotic ribosomal protein eL15 family. As to quaternary structure, component of the large ribosomal subunit (LSU). Mature yeast ribosomes consist of a small (40S) and a large (60S) subunit. The 40S small subunit contains 1 molecule of ribosomal RNA (18S rRNA) and 33 different proteins (encoded by 57 genes). The large 60S subunit contains 3 rRNA molecules (25S, 5.8S and 5S rRNA) and 46 different proteins (encoded by 81 genes).

It localises to the cytoplasm. Its function is as follows. Component of the ribosome, a large ribonucleoprotein complex responsible for the synthesis of proteins in the cell. The small ribosomal subunit (SSU) binds messenger RNAs (mRNAs) and translates the encoded message by selecting cognate aminoacyl-transfer RNA (tRNA) molecules. The large subunit (LSU) contains the ribosomal catalytic site termed the peptidyl transferase center (PTC), which catalyzes the formation of peptide bonds, thereby polymerizing the amino acids delivered by tRNAs into a polypeptide chain. The nascent polypeptides leave the ribosome through a tunnel in the LSU and interact with protein factors that function in enzymatic processing, targeting, and the membrane insertion of nascent chains at the exit of the ribosomal tunnel. In Saccharomyces cerevisiae (strain ATCC 204508 / S288c) (Baker's yeast), this protein is Large ribosomal subunit protein eL15A.